A 453-amino-acid polypeptide reads, in one-letter code: Na(+)/H(+) antiporter NhaA 2 (453 aa).

Helical transmembrane passes span 32-52, 71-91, 109-129, 140-160, 169-189, 193-213, 232-252, 284-304, 310-330, 356-376, and 382-402; these read GALL…PGAA, LSLA…VAGL, AVPI…YVLI, GWAI…AVIG, VFLL…IAVF, NLSV…AILL, ALVH…ALVV, AVPV…GGLV, PVAI…VIAV, MLAG…FAAG, and HVKI…AVIL. Residues 409–453 form a disordered region; that stretch reads GSRGNDATTRDPDQTRVGTATQRTTPDHPTPAATDANQPARSPAP.

This sequence belongs to the NhaA Na(+)/H(+) (TC 2.A.33) antiporter family.

Its subcellular location is the cell membrane. It catalyses the reaction Na(+)(in) + 2 H(+)(out) = Na(+)(out) + 2 H(+)(in). Functionally, na(+)/H(+) antiporter that extrudes sodium in exchange for external protons. This chain is Na(+)/H(+) antiporter NhaA 2, found in Salinispora tropica (strain ATCC BAA-916 / DSM 44818 / JCM 13857 / NBRC 105044 / CNB-440).